Here is a 144-residue protein sequence, read N- to C-terminus: Transcription antitermination protein NusB (144 aa).

Belongs to the NusB family.

Its function is as follows. Involved in transcription antitermination. Required for transcription of ribosomal RNA (rRNA) genes. Binds specifically to the boxA antiterminator sequence of the ribosomal RNA (rrn) operons. The polypeptide is Transcription antitermination protein NusB (Streptomyces avermitilis (strain ATCC 31267 / DSM 46492 / JCM 5070 / NBRC 14893 / NCIMB 12804 / NRRL 8165 / MA-4680)).